Reading from the N-terminus, the 341-residue chain is MSIPIPGIKDISKLKFFYGFKYLWNPTVYNRIFDKLDLTKTYKHPQELKVLDLYPGVGVQSAIFYNKYCPKQYSLIEKRSSLYKFLNAKFEESPLQILKKDPYDWSTYSSLIDEERIFVPEVQPSDHINDKFLTVANVTGEGSEGLIMQWLSCIGNKNWLYRFGKVKMLLWMPSTTAKKLLARPSTHARSKCSVVREAFTDTKLIAISDANELKGFDSHCIEEWDPVIFSAADIWPTKGKPIALVEMDPIDFDFDVDNWDYVTRHLMILKRTPLNTVMDSLGHGGQQYFNSRITDKDLIKKCPIDLTNDEFIYLTKLFMEWPFKPDILMDFVDMYQTEHSG.

Residues Leu23, Glu77, Asp101, and Asn137 each contribute to the S-adenosyl-L-methionine site.

This sequence belongs to the class I-like SAM-binding methyltransferase superfamily. rRNA adenine N(6)-methyltransferase family.

Its subcellular location is the mitochondrion. Functionally, mitochondrial transcription factor that confers selective promoter recognition on the core subunit of the yeast mitochondrial RNA polymerase. Interacts with DNA in a non-specific manner. The protein is Mitochondrial transcription factor 1 (MTF1) of Saccharomyces paradoxus (Yeast).